The primary structure comprises 288 residues: Polyamine aminopropyltransferase (288 aa).

Residues 9-238 (ETLHDQFGQY…GIMTFAWATD (230 aa)) form the PABS domain. Gln-33 lines the S-methyl-5'-thioadenosine pocket. 2 residues coordinate spermidine: His-64 and Asp-88. S-methyl-5'-thioadenosine is bound by residues Glu-108 and 140 to 141 (DG). The active-site Proton acceptor is Asp-158. Position 158 to 161 (158 to 161 (DCTD)) interacts with spermidine. An S-methyl-5'-thioadenosine-binding site is contributed by Pro-165.

This sequence belongs to the spermidine/spermine synthase family. Homodimer or homotetramer.

The protein localises to the cytoplasm. The catalysed reaction is S-adenosyl 3-(methylsulfanyl)propylamine + putrescine = S-methyl-5'-thioadenosine + spermidine + H(+). Its pathway is amine and polyamine biosynthesis; spermidine biosynthesis; spermidine from putrescine: step 1/1. Functionally, catalyzes the irreversible transfer of a propylamine group from the amino donor S-adenosylmethioninamine (decarboxy-AdoMet) to putrescine (1,4-diaminobutane) to yield spermidine. This chain is Polyamine aminopropyltransferase, found in Escherichia coli O17:K52:H18 (strain UMN026 / ExPEC).